The sequence spans 571 residues: Proline--tRNA ligase (571 aa).

Belongs to the class-II aminoacyl-tRNA synthetase family. ProS type 1 subfamily. As to quaternary structure, homodimer.

It localises to the cytoplasm. It carries out the reaction tRNA(Pro) + L-proline + ATP = L-prolyl-tRNA(Pro) + AMP + diphosphate. Its function is as follows. Catalyzes the attachment of proline to tRNA(Pro) in a two-step reaction: proline is first activated by ATP to form Pro-AMP and then transferred to the acceptor end of tRNA(Pro). As ProRS can inadvertently accommodate and process non-cognate amino acids such as alanine and cysteine, to avoid such errors it has two additional distinct editing activities against alanine. One activity is designated as 'pretransfer' editing and involves the tRNA(Pro)-independent hydrolysis of activated Ala-AMP. The other activity is designated 'posttransfer' editing and involves deacylation of mischarged Ala-tRNA(Pro). The misacylated Cys-tRNA(Pro) is not edited by ProRS. The polypeptide is Proline--tRNA ligase (Pseudomonas paraeruginosa (strain DSM 24068 / PA7) (Pseudomonas aeruginosa (strain PA7))).